The chain runs to 96 residues: MRDPRDIIKRPVITERSMEMMAEKKYTFDVDVKSNKTEVKDAIEAIFGVNVDKVNIMNYKPKAKRVGRHAGFTSRRRKAIVKLTADSKEIEIFQGV.

It belongs to the universal ribosomal protein uL23 family. In terms of assembly, part of the 50S ribosomal subunit. Contacts protein L29, and trigger factor when it is bound to the ribosome.

Functionally, one of the early assembly proteins it binds 23S rRNA. One of the proteins that surrounds the polypeptide exit tunnel on the outside of the ribosome. Forms the main docking site for trigger factor binding to the ribosome. This Bacillus mycoides (strain KBAB4) (Bacillus weihenstephanensis) protein is Large ribosomal subunit protein uL23.